The sequence spans 68 residues: Alpha/kappa-conotoxin-like pl14.2 (68 aa).

A signal peptide spans 1-27 (MPSVRSVTCCCLLWMMFSVQLVTPGSP). Residues 28 to 39 (ATAQLSGQRTAR) constitute a propeptide that is removed on maturation. Disulfide bonds link Cys46-Cys61 and Cys50-Cys63. Residue Arg64 is modified to Arginine amide. A propeptide spanning residues 65-68 (GKRD) is cleaved from the precursor.

Belongs to the conotoxin J superfamily. Expressed by the venom duct.

It localises to the secreted. In terms of biological role, highly inhibits both nicotinic acetylcholine receptors (neuronal (alpha-3/beta-4) and muscular (alpha-1/beta-1/epsilon/delta) subtypes) and the voltage-gated potassium channel Kv1.6/KCNA6 subtype. The chain is Alpha/kappa-conotoxin-like pl14.2 from Conus planorbis (Planorbis cone).